Reading from the N-terminus, the 634-residue chain is DNA gyrase subunit B (634 aa).

A Toprim domain is found at 416–530 (REIYIVEGDS…NGYIYIAMPP (115 aa)). Glu-422, Asp-495, and Asp-497 together coordinate Mg(2+).

The protein belongs to the type II topoisomerase GyrB family. In terms of assembly, heterotetramer, composed of two GyrA and two GyrB chains. In the heterotetramer, GyrA contains the active site tyrosine that forms a transient covalent intermediate with DNA, while GyrB binds cofactors and catalyzes ATP hydrolysis. The cofactor is Mg(2+). Requires Mn(2+) as cofactor. It depends on Ca(2+) as a cofactor.

It is found in the cytoplasm. It carries out the reaction ATP-dependent breakage, passage and rejoining of double-stranded DNA.. Functionally, a type II topoisomerase that negatively supercoils closed circular double-stranded (ds) DNA in an ATP-dependent manner to modulate DNA topology and maintain chromosomes in an underwound state. Negative supercoiling favors strand separation, and DNA replication, transcription, recombination and repair, all of which involve strand separation. Also able to catalyze the interconversion of other topological isomers of dsDNA rings, including catenanes and knotted rings. Type II topoisomerases break and join 2 DNA strands simultaneously in an ATP-dependent manner. This chain is DNA gyrase subunit B, found in Borreliella burgdorferi (strain ATCC 35210 / DSM 4680 / CIP 102532 / B31) (Borrelia burgdorferi).